Consider the following 402-residue polypeptide: Acetate kinase (402 aa).

Residue Asn-7 coordinates Mg(2+). Residue Lys-14 participates in ATP binding. Arg-95 is a substrate binding site. Asp-152 functions as the Proton donor/acceptor in the catalytic mechanism. ATP is bound by residues 212–216 (HLGNG), 286–288 (DMR), and 334–338 (GIGEN). Position 388 (Glu-388) interacts with Mg(2+).

It belongs to the acetokinase family. In terms of assembly, homodimer. Mg(2+) serves as cofactor. Mn(2+) is required as a cofactor.

It localises to the cytoplasm. It catalyses the reaction acetate + ATP = acetyl phosphate + ADP. Its pathway is metabolic intermediate biosynthesis; acetyl-CoA biosynthesis; acetyl-CoA from acetate: step 1/2. Functionally, catalyzes the formation of acetyl phosphate from acetate and ATP. Can also catalyze the reverse reaction. The sequence is that of Acetate kinase from Nitratidesulfovibrio vulgaris (strain DP4) (Desulfovibrio vulgaris).